The sequence spans 107 residues: Phosphoribosyl-ATP pyrophosphatase (107 aa).

It belongs to the PRA-PH family.

The protein localises to the cytoplasm. The enzyme catalyses 1-(5-phospho-beta-D-ribosyl)-ATP + H2O = 1-(5-phospho-beta-D-ribosyl)-5'-AMP + diphosphate + H(+). It functions in the pathway amino-acid biosynthesis; L-histidine biosynthesis; L-histidine from 5-phospho-alpha-D-ribose 1-diphosphate: step 2/9. This chain is Phosphoribosyl-ATP pyrophosphatase, found in Rhizobium johnstonii (strain DSM 114642 / LMG 32736 / 3841) (Rhizobium leguminosarum bv. viciae).